The following is a 499-amino-acid chain: Maturase K (499 aa).

Belongs to the intron maturase 2 family. MatK subfamily.

It is found in the plastid. Its subcellular location is the chloroplast. In terms of biological role, usually encoded in the trnK tRNA gene intron. Probably assists in splicing its own and other chloroplast group II introns. The chain is Maturase K from Macrozamia communis (Burrawang palm).